Here is a 364-residue protein sequence, read N- to C-terminus: Probable dual-specificity RNA methyltransferase RlmN (364 aa).

The Proton acceptor role is filled by glutamate 107. The 234-residue stretch at 113-346 (HDYGNSVCVT…ATIRREQGSD (234 aa)) folds into the Radical SAM core domain. Residues cysteine 120 and cysteine 351 are joined by a disulfide bond. [4Fe-4S] cluster contacts are provided by cysteine 127, cysteine 131, and cysteine 134. Residues 177–178 (GE), serine 209, 232–234 (SLH), and asparagine 308 each bind S-adenosyl-L-methionine. Cysteine 351 serves as the catalytic S-methylcysteine intermediate.

This sequence belongs to the radical SAM superfamily. RlmN family. The cofactor is [4Fe-4S] cluster.

It localises to the cytoplasm. The enzyme catalyses adenosine(2503) in 23S rRNA + 2 reduced [2Fe-2S]-[ferredoxin] + 2 S-adenosyl-L-methionine = 2-methyladenosine(2503) in 23S rRNA + 5'-deoxyadenosine + L-methionine + 2 oxidized [2Fe-2S]-[ferredoxin] + S-adenosyl-L-homocysteine. It carries out the reaction adenosine(37) in tRNA + 2 reduced [2Fe-2S]-[ferredoxin] + 2 S-adenosyl-L-methionine = 2-methyladenosine(37) in tRNA + 5'-deoxyadenosine + L-methionine + 2 oxidized [2Fe-2S]-[ferredoxin] + S-adenosyl-L-homocysteine. Its function is as follows. Specifically methylates position 2 of adenine 2503 in 23S rRNA and position 2 of adenine 37 in tRNAs. Confers resistance to some classes of antibiotics. In Staphylococcus aureus (strain MW2), this protein is Probable dual-specificity RNA methyltransferase RlmN.